A 3131-amino-acid chain; its full sequence is Enniatin synthase (3131 aa).

A condensation 1 region spans residues 53–466 (ADDKQRAVGH…VEKVDMMTQE (414 aa)). Residues 186 to 212 (NDEHPRQFETPDSSQATPEEDLQPNPS) are disordered. The adenylation 1 stretch occupies residues 495–887 (SQSPNKAAVA…GRMDSQVKIR (393 aa)). Residues 1010 to 1086 (SSGTDTYTKL…GLKAIVIGTS (77 aa)) enclose the Carrier 1 domain. At Ser1047 the chain carries O-(pantetheine 4'-phosphoryl)serine. The tract at residues 1105 to 1534 (SYAQNRMWFL…ETCISVLPLT (430 aa)) is condensation 2. The adenylation 2 stretch occupies residues 1563–1960 (FREQAAANPE…GRMDNQFKIR (398 aa)). The tract at residues 2021-2177 (EGWQDHFESG…YLAEVIDGLI (157 aa)) is S-adenosyl-L-methionine-dependent N-methyltransferase. Carrier domains lie at 2504-2578 (FPIS…RQGL) and 2598-2671 (APRT…ESSH). An O-(pantetheine 4'-phosphoryl)serine mark is found at Ser2538 and Ser2632. A condensation 3 region spans residues 2718–3123 (QDVYPSTQMQ…RHVLEEVCKT (406 aa)).

The protein belongs to the ATP-dependent AMP-binding enzyme family. Pantetheine 4'-phosphate is required as a cofactor. Post-translationally, the N-terminus is blocked.

Its pathway is antibiotic biosynthesis; enniatin biosynthesis. With respect to regulation, the N-methylation activity is inhibited by S-adenosyl-L-homocysteine and sinefugin. Nonribosomal peptide synthetase that synthesizes enniatin by coupling three D-hydroxycarboxylic acids and three L-amino acids via amide and ester bonds in an alternating fashion. Whereas ESYN1 can accept different amino acids as precursors (L -valine, L-isoleucine or L-leucine), only one species of D-hydroxycarboxylic acid can be found in natural enniatin isolates (D-hydroxyisovaleric acid, D-Hiv). D-Hiv stems from L-valine deanimation by a valine aminotransferase to 2-keto-isovaleric acid (2-Kiv), which becomes subsequently reduced by a keto-isovaleric acid reductase (KivR) to D-Hiv. Peptide bond formation and N-methylation of the amino acid occur before three enzyme-bound dipeptidols are condensed to a hexapeptidol. The chain is Enniatin synthase from Fusarium equiseti (Fusarium scirpi).